The primary structure comprises 121 residues: MRLSYVFVVFAASLLVTADTLSTNTGVQAANLVGPAQRLLRKHYTAAENDGDSEARALNPEKMKTMWKAGMTVDGYAAKLKLTDKIAAAANSAKAMEKLGETHKMKKLLRYLNYVAEHTAV.

The first 18 residues, 1–18 (MRLSYVFVVFAASLLVTA), serve as a signal peptide directing secretion. The short motif at 38–56 (RLLRKHYTAAENDGDSEAR) is the RxLR-dEER element. The tract at residues 57 to 121 (ALNPEKMKTM…LNYVAEHTAV (65 aa)) is WY domain.

The protein belongs to the RxLR effector family.

The protein localises to the secreted. It is found in the host cytoplasm. It localises to the host nucleus. In terms of biological role, secreted effector involved in P.mirabilis colonization of host plants. May perturb the signaling of cell death associated with plant immunity, via interaction with a host MAP kinase. This chain is RxLR effector protein PexRD2, found in Phytophthora mirabilis.